The following is a 257-amino-acid chain: Acetylglutamate kinase (257 aa).

Residues 41-42 (GG), Arg63, and Asn158 contribute to the substrate site.

Belongs to the acetylglutamate kinase family. ArgB subfamily.

Its subcellular location is the cytoplasm. The catalysed reaction is N-acetyl-L-glutamate + ATP = N-acetyl-L-glutamyl 5-phosphate + ADP. It participates in amino-acid biosynthesis; L-arginine biosynthesis; N(2)-acetyl-L-ornithine from L-glutamate: step 2/4. Functionally, catalyzes the ATP-dependent phosphorylation of N-acetyl-L-glutamate. The polypeptide is Acetylglutamate kinase (Bacteroides thetaiotaomicron (strain ATCC 29148 / DSM 2079 / JCM 5827 / CCUG 10774 / NCTC 10582 / VPI-5482 / E50)).